A 153-amino-acid polypeptide reads, in one-letter code: Large ribosomal subunit protein uL30 (153 aa).

This sequence belongs to the universal ribosomal protein uL30 family. In terms of assembly, part of the 50S ribosomal subunit.

The chain is Large ribosomal subunit protein uL30 from Methanosarcina barkeri (strain Fusaro / DSM 804).